We begin with the raw amino-acid sequence, 576 residues long: Boron transporter 1 (576 aa).

The Cytoplasmic portion of the chain corresponds to 1–84; the sequence is MSNESTRVTV…SDWVDAFNYR (84 aa). A disordered region spans residues 19 to 48; the sequence is ECAQALERTNDELDRESSVSESRSDEESHE. Basic and acidic residues predominate over residues 26 to 48; the sequence is RTNDELDRESSVSESRSDEESHE. A helical transmembrane segment spans residues 85-105; it reads VIPSIVDTYFNNLLPAIAFAQ. Residues 106–116 lie on the Extracellular side of the membrane; sequence DMFDRTDNSYG. A helical membrane pass occupies residues 117 to 134; sequence VNEVLLSSAMAGIVFGVL. The Cytoplasmic segment spans residues 135 to 140; sequence GGQPLC. Residues 141-160 traverse the membrane as a helical segment; sequence IVGVTGPISIFNYTVYEIIK. Topologically, residues 161-165 are extracellular; sequence PLNTS. A helical transmembrane segment spans residues 166 to 186; sequence YFGFMFWICMWSMIFHLVLAF. At 187-192 the chain is on the cytoplasmic side; it reads TNAVCL. A helical membrane pass occupies residues 193–213; sequence LQYVTTFPCDIFGLFINVVYI. At 214 to 235 the chain is on the extracellular side; that stretch reads QKGIQILTRQFSAKSGEKSVQD. Residues 236–256 form a helical membrane-spanning segment; sequence GFASVVVALVMTAFGLFFKLF. At 257–274 the chain is on the cytoplasmic side; sequence HYYPLFSHRIRTFISDYS. The helical transmembrane segment at 275–295 threads the bilayer; sequence TALSVLFWSSFTHFGGYLHDV. Over 296 to 329 the chain is Extracellular; the sequence is KFKKLPITKAFFPTSKVNRPQNTWLAYEPIPVKD. A helical membrane pass occupies residues 330 to 350; sequence VFIALPFGIFLTILFYFDHNV. The Cytoplasmic segment spans residues 351–373; the sequence is SSLMAQRHQYKLKKPSSFHYDFA. The chain crosses the membrane as a helical span at residues 374–394; that stretch reads LLGLTTCISGVLGIPAPNGLI. Topologically, residues 395-438 are extracellular; sequence PQAPLHTETLLVRDSNQKVISCVEQRFTNTFQGLMILGTMTRPL. Residues 439 to 459 form a helical membrane-spanning segment; sequence LVCLGEIPQAVLSGLFFIMGI. At 460–495 the chain is on the cytoplasmic side; the sequence is NGLMTNSIIQRLVFLFSDPNRRDNTSPLMKVSKKSM. The chain crosses the membrane as a helical span at residues 496–516; it reads LIFLSFSLTGFAGEFAITNTI. At 517–518 the chain is on the extracellular side; sequence AA. A helical transmembrane segment spans residues 519–539; sequence IGFPLVLLLSVLVSFSFAYIF. The Cytoplasmic portion of the chain corresponds to 540 to 576; that stretch reads PTEELKILDTNVAQKFTIKNLLLENIRDAKFCDKHED.

This sequence belongs to the anion exchanger (TC 2.A.31) family.

The protein resides in the cell membrane. Its subcellular location is the vacuole membrane. Its function is as follows. Functions in boric acid/borate export across the plasma membrane, and thereby protects yeast cells from boron toxicity. Involved in the trafficking of proteins to the vacuole. This Saccharomyces cerevisiae (strain ATCC 204508 / S288c) (Baker's yeast) protein is Boron transporter 1 (BOR1).